Reading from the N-terminus, the 159-residue chain is Large ribosomal subunit protein uL22 (159 aa).

Residues 129-159 are disordered; it reads VEGQQKAKMARQKAVTSVVKAPSKTQGGVQK.

It belongs to the universal ribosomal protein uL22 family. As to quaternary structure, part of the 50S ribosomal subunit.

This protein binds specifically to 23S rRNA; its binding is stimulated by other ribosomal proteins, e.g. L4, L17, and L20. It is important during the early stages of 50S assembly. It makes multiple contacts with different domains of the 23S rRNA in the assembled 50S subunit and ribosome. In terms of biological role, the globular domain of the protein is located near the polypeptide exit tunnel on the outside of the subunit, while an extended beta-hairpin is found that lines the wall of the exit tunnel in the center of the 70S ribosome. The chain is Large ribosomal subunit protein uL22 (rplV) from Mycoplasma pneumoniae (strain ATCC 29342 / M129 / Subtype 1) (Mycoplasmoides pneumoniae).